A 321-amino-acid polypeptide reads, in one-letter code: MLTLNKTDLIPASFILNGVPGLEDTQLWISFPFCSMYVVAMVGNCGLLYLIHYEDALHKPMYYFLAMLSFTDLVMCSSTIPKALCIFWFHLKDIGFDECLVQMFFTHTFTGMESGVLMLMALDRYVAICYPLRYSTILTNPVIAKVGTATFLRGVLLIIPFTFLTKLLPYCRGNILPHTYCDHMSVAKLSCGNVKVNAIYGLMVALLIWGFDILCITNSYTMILRAVVSLSSADARQKAFNTCTAHICAIVFSYTPAFFSFFSHRFGEHIIPPSCHIIVANIYLLLPPTMNPIVYGVKTKQIRDCVIRILSGSKDTKSYSM.

At 1-27 (MLTLNKTDLIPASFILNGVPGLEDTQL) the chain is on the extracellular side. Asparagine 5 carries N-linked (GlcNAc...) asparagine glycosylation. The helical transmembrane segment at 28–48 (WISFPFCSMYVVAMVGNCGLL) threads the bilayer. Over 49–56 (YLIHYEDA) the chain is Cytoplasmic. The helical transmembrane segment at 57 to 77 (LHKPMYYFLAMLSFTDLVMCS) threads the bilayer. At 78-101 (STIPKALCIFWFHLKDIGFDECLV) the chain is on the extracellular side. Cysteine 99 and cysteine 191 are joined by a disulfide. The chain crosses the membrane as a helical span at residues 102 to 122 (QMFFTHTFTGMESGVLMLMAL). Residues 123–141 (DRYVAICYPLRYSTILTNP) lie on the Cytoplasmic side of the membrane. The helical transmembrane segment at 142 to 162 (VIAKVGTATFLRGVLLIIPFT) threads the bilayer. The Extracellular segment spans residues 163–198 (FLTKLLPYCRGNILPHTYCDHMSVAKLSCGNVKVNA). A helical membrane pass occupies residues 199–219 (IYGLMVALLIWGFDILCITNS). The Cytoplasmic segment spans residues 220 to 239 (YTMILRAVVSLSSADARQKA). A helical membrane pass occupies residues 240–260 (FNTCTAHICAIVFSYTPAFFS). Over 261–276 (FFSHRFGEHIIPPSCH) the chain is Extracellular. The chain crosses the membrane as a helical span at residues 277 to 297 (IIVANIYLLLPPTMNPIVYGV). Over 298–321 (KTKQIRDCVIRILSGSKDTKSYSM) the chain is Cytoplasmic.

This sequence belongs to the G-protein coupled receptor 1 family.

The protein localises to the cell membrane. Odorant receptor. This is Olfactory receptor 52N4 (OR52N4) from Homo sapiens (Human).